A 292-amino-acid chain; its full sequence is ABC transporter ATP-binding protein YtrB (292 aa).

Positions 2 to 227 (IELRQLSKAI…YIKIQMAFDT (226 aa)) constitute an ABC transporter domain. Residue 34–41 (GRNGSGKT) participates in ATP binding.

This sequence belongs to the ABC transporter superfamily. As to quaternary structure, the complex is composed of 2 ATP-binding proteins (YtrB and YtrE), 2 transmembrane proteins (YtrC and YtrD) and a solute-binding protein (YtrF).

The protein localises to the cell membrane. Functionally, part of the ABC transporter complex YtrBCDEF that plays a role in acetoin utilization during stationary phase and sporulation. The sequence is that of ABC transporter ATP-binding protein YtrB (ytrB) from Bacillus subtilis (strain 168).